We begin with the raw amino-acid sequence, 1356 residues long: RHO1 GDP-GTP exchange protein 2 (1356 aa).

N-acetylserine is present on Ser-2. Disordered regions lie at residues 74-94 and 109-175; these read RRSG…EMKG and EVPD…PRNE. The residue at position 76 (Ser-76) is a Phosphoserine. 2 stretches are compositionally biased toward polar residues: residues 109 to 125 and 147 to 157; these read EVPD…TPVS and HIYSTSNSASR. The residue at position 193 (Ser-193) is a Phosphoserine. 5 disordered regions span residues 202 to 291, 303 to 362, 383 to 409, 531 to 571, and 626 to 645; these read LKKQ…RSMS, SFQS…SSSN, SVSG…VMSA, GNHS…SQQK, and NISM…TSSV. Residues 204–221 are compositionally biased toward polar residues; sequence KQSSFSTGSASTTPTQAR. Ser-223 is modified (phosphoserine). Residues 235–244 show a composition bias toward basic and acidic residues; that stretch reads SSKDLHEQHQ. Residues 250–265 show a composition bias toward low complexity; sequence QHNNINNHNNNNTNNN. The segment covering 271–281 has biased composition (polar residues); that stretch reads VGSSNSNYPQH. Low complexity predominate over residues 282-291; the sequence is SHSISSRSMS. Residues 303-325 are compositionally biased toward polar residues; that stretch reads SFQSKTSNSRKATQKYDITSNPF. The segment covering 329–338 has biased composition (basic residues); it reads HHHHHHHHSS. Composition is skewed to low complexity over residues 339 to 362 and 383 to 401; these read NSHS…SSSN and SVSG…TPLS. Ser-566 and Ser-628 each carry phosphoserine. The DH domain maps to 659–846; the sequence is KRQEAIYEVY…RDFMKRIDQA (188 aa). The 303-residue stretch at 1034–1336 folds into the CNH domain; sequence TNKINSVTSC…RLLQTSTQEI (303 aa).

Stimulates the exchange of RHO1 GDP-bound form into GTP-bound form. The chain is RHO1 GDP-GTP exchange protein 2 (ROM2) from Saccharomyces cerevisiae (strain ATCC 204508 / S288c) (Baker's yeast).